The sequence spans 109 residues: Large ribosomal subunit protein uL24 (109 aa).

This sequence belongs to the universal ribosomal protein uL24 family. In terms of assembly, part of the 50S ribosomal subunit.

One of two assembly initiator proteins, it binds directly to the 5'-end of the 23S rRNA, where it nucleates assembly of the 50S subunit. In terms of biological role, one of the proteins that surrounds the polypeptide exit tunnel on the outside of the subunit. The sequence is that of Large ribosomal subunit protein uL24 from Ehrlichia chaffeensis (strain ATCC CRL-10679 / Arkansas).